The primary structure comprises 61 residues: Large ribosomal subunit protein uL30 (61 aa).

Belongs to the universal ribosomal protein uL30 family. As to quaternary structure, part of the 50S ribosomal subunit.

The sequence is that of Large ribosomal subunit protein uL30 from Acidithiobacillus ferrooxidans (strain ATCC 23270 / DSM 14882 / CIP 104768 / NCIMB 8455) (Ferrobacillus ferrooxidans (strain ATCC 23270)).